We begin with the raw amino-acid sequence, 676 residues long: WD repeat-containing protein 48 (676 aa).

Phosphotyrosine is present on Tyr28. WD repeat units follow at residues 28–67, 73–112, 115–154, 166–205, 208–247, 250–289, 292–334, and 358–397; these read YNRNGVNALQLDPALNRLFTAGRDSIIRIWSVNQHKQDPY, HHTDWVNDVVLCCNGKTLISASSDTTVKVWNAHKGFCMST, THKDYVKALAYAKDKELVASAGLDRQIFLWDVNTLTALTA, GNKDSIYSLAMNQLGTIIVSGSTEKVLRVWDPRTCAKLMK, GHTDNVKALLLHRDGTQCLSGSSDGTIRLWSLGQQRCIAT, VHDEGVWALQVNDAFTHVYSGGRDRKIYCTDLRNPDIRVL, EEKA…NFRA, and KGGASIIQCHILNDKRHILTKDTNNNVAYWDVLKACKVED. Lys214 bears the N6-acetyllysine mark. The residue at position 578 (Lys578) is an N6-acetyllysine. The interval 607-628 is disordered; that stretch reads LDNESQTTSSSNNEKPEQEKEE. A compositionally biased stretch (low complexity) spans 609 to 619; sequence NESQTTSSSNN. Thr613 bears the Phosphothreonine mark.

The protein belongs to the WD repeat WDR48 family. Interacts with USP46. Interacts with USP1. Interacts with USP12. Component of the USP12-WDR20-WDR48 deubiquitinating complex. Component of the USP12-DMWD-WDR48 deubiquitinating complex. Interacts with PHLPP1. Interacts with RAD51AP1; the interaction is direct and promotes formation of a trimeric complex with RAD51 via RAD51AP1. Interacts with ATAD5; the interaction regulates USP1-mediated PCNA deubiquitination. Interacts with RAD51; the interaction is enhanced under replication stress. Interacts with ITCH; the interaction is more efficient when both USP12 and WDR48/UAF1 are involved and may facilitate recruitment of the USP12 deubiquitinating complex to Notch.

It is found in the nucleus. Its subcellular location is the cytoplasm. The protein resides in the lysosome. The protein localises to the late endosome. Regulator of deubiquitinating complexes, which acts as a strong activator of USP1, USP12 and USP46. Enhances the USP1-mediated deubiquitination of FANCD2; USP1 being almost inactive by itself. Activates deubiquitination by increasing the catalytic turnover without increasing the affinity of deubiquitinating enzymes for the substrate. Also activates deubiquitinating activity of complexes containing USP12. Docks at the distal end of the USP12 fingers domain and induces a cascade of structural changes leading to the activation of the enzyme. Together with RAD51AP1, promotes DNA repair by stimulating RAD51-mediated homologous recombination. Binds single-stranded DNA (ssDNA) and double-stranded DNA (dsDNA). DNA-binding is required both for USP1-mediated deubiquitination of FANCD2 and stimulation of RAD51-mediated homologous recombination: both WDR48/UAF1 and RAD51AP1 have coordinated role in DNA-binding during these processes. Together with ATAD5 and by regulating USP1 activity, has a role in PCNA-mediated translesion synthesis (TLS) by deubiquitinating monoubiquitinated PCNA. Together with ATAD5, has a role in recruiting RAD51 to stalled forks during replication stress. The sequence is that of WD repeat-containing protein 48 (Wdr48) from Mus musculus (Mouse).